A 710-amino-acid chain; its full sequence is Putative membrane protein IgaA homolog (710 aa).

A topological domain (periplasmic) is located at residue M1. A helical transmembrane segment spans residues 2–22 (STILIFIAALLACSLLAIWRF). Residues 23-204 (RVKSRRGSLP…YALSRPAGLR (182 aa)) lie on the Cytoplasmic side of the membrane. Helical transmembrane passes span 205–225 (EALL…TPDV) and 226–246 (FVPW…WGLF). The Cytoplasmic portion of the chain corresponds to 247 to 339 (APPSKSALRE…KNFPLQHWLR (93 aa)). A helical membrane pass occupies residues 340 to 360 (STVIAIGSLLVLFMLLFWIPL). Residues 361 to 656 (DMPIKFTLSW…PDKSGWWRYL (296 aa)) lie on the Periplasmic side of the membrane. The helical transmembrane segment at 657-677 (GTTLLMLAMIVSAVYNGIQAF) threads the bilayer. The Cytoplasmic segment spans residues 678–710 (RRYQRHRTRMADIQEYYESCLNPRLTVSPENLI).

This sequence belongs to the IgaA family.

It is found in the cell inner membrane. The chain is Putative membrane protein IgaA homolog (yrfF) from Salmonella typhi.